The sequence spans 649 residues: uncharacterized protein (649 aa).

It localises to the nucleus. Its subcellular location is the cytoplasm. This is an uncharacterized protein from Schizosaccharomyces pombe (strain 972 / ATCC 24843) (Fission yeast).